The chain runs to 161 residues: SsrA-binding protein (161 aa).

Residues 137–161 (HDKRTDSKEKDWNRDKARIMKSSLR) form a disordered region. Over residues 139–154 (KRTDSKEKDWNRDKAR) the composition is skewed to basic and acidic residues.

The protein belongs to the SmpB family.

It is found in the cytoplasm. Required for rescue of stalled ribosomes mediated by trans-translation. Binds to transfer-messenger RNA (tmRNA), required for stable association of tmRNA with ribosomes. tmRNA and SmpB together mimic tRNA shape, replacing the anticodon stem-loop with SmpB. tmRNA is encoded by the ssrA gene; the 2 termini fold to resemble tRNA(Ala) and it encodes a 'tag peptide', a short internal open reading frame. During trans-translation Ala-aminoacylated tmRNA acts like a tRNA, entering the A-site of stalled ribosomes, displacing the stalled mRNA. The ribosome then switches to translate the ORF on the tmRNA; the nascent peptide is terminated with the 'tag peptide' encoded by the tmRNA and targeted for degradation. The ribosome is freed to recommence translation, which seems to be the essential function of trans-translation. The chain is SsrA-binding protein from Aliivibrio salmonicida (strain LFI1238) (Vibrio salmonicida (strain LFI1238)).